A 1571-amino-acid chain; its full sequence is Pentafunctional AROM polypeptide (1571 aa).

Positions 1 to 380 (MTSVEKVSIL…YQLKAHQVSK (380 aa)) are 3-dehydroquinate synthase. NAD(+) is bound by residues 43–45 (DTN), 81–84 (ENNK), 112–114 (GGV), and D117. R128 serves as a coordination point for 7-phospho-2-dehydro-3-deoxy-D-arabino-heptonate. 137–138 (TS) is a binding site for NAD(+). Residues D144 and K150 each contribute to the 7-phospho-2-dehydro-3-deoxy-D-arabino-heptonate site. K159 is a binding site for NAD(+). N160 contributes to the 7-phospho-2-dehydro-3-deoxy-D-arabino-heptonate binding site. NAD(+) contacts are provided by residues 177–180 (FLET) and N188. E192 contacts Zn(2+). Residues 192-195 (EVVK) and K244 contribute to the 7-phospho-2-dehydro-3-deoxy-D-arabino-heptonate site. E254 functions as the Proton acceptor; for 3-dehydroquinate synthase activity in the catalytic mechanism. 7-phospho-2-dehydro-3-deoxy-D-arabino-heptonate is bound by residues 258–262 (RNLLN) and H265. H265 serves as a coordination point for Zn(2+). Catalysis depends on H269, which acts as the Proton acceptor; for 3-dehydroquinate synthase activity. 2 residues coordinate 7-phospho-2-dehydro-3-deoxy-D-arabino-heptonate: H281 and K352. H281 provides a ligand contact to Zn(2+). The segment at 393–843 (VHPFDDKLIP…WDILHTKFKV (451 aa)) is EPSP synthase. C825 functions as the For EPSP synthase activity in the catalytic mechanism. The segment at 868–1058 (KRSIIVIGMR…IPKKRSFYTS (191 aa)) is shikimate kinase. Position 875-882 (875-882 (GMRGAGKS)) interacts with ATP. The segment at 1059-1271 (LTFSDLTEVA…GNEGALDVAQ (213 aa)) is 3-dehydroquinase. K1204 serves as the catalytic Schiff-base intermediate with substrate; for 3-dehydroquinate dehydratase activity. The segment at 1284–1571 (EKHFWIVGNP…DVVHDAVVNQ (288 aa)) is shikimate dehydrogenase.

In the N-terminal section; belongs to the sugar phosphate cyclases superfamily. Dehydroquinate synthase family. This sequence in the 2nd section; belongs to the EPSP synthase family. It in the 3rd section; belongs to the shikimate kinase family. The protein in the 4th section; belongs to the type-I 3-dehydroquinase family. In the C-terminal section; belongs to the shikimate dehydrogenase family. As to quaternary structure, homodimer. It depends on Zn(2+) as a cofactor.

The protein resides in the cytoplasm. It carries out the reaction 7-phospho-2-dehydro-3-deoxy-D-arabino-heptonate = 3-dehydroquinate + phosphate. The enzyme catalyses 3-dehydroquinate = 3-dehydroshikimate + H2O. It catalyses the reaction shikimate + NADP(+) = 3-dehydroshikimate + NADPH + H(+). The catalysed reaction is shikimate + ATP = 3-phosphoshikimate + ADP + H(+). It carries out the reaction 3-phosphoshikimate + phosphoenolpyruvate = 5-O-(1-carboxyvinyl)-3-phosphoshikimate + phosphate. It participates in metabolic intermediate biosynthesis; chorismate biosynthesis; chorismate from D-erythrose 4-phosphate and phosphoenolpyruvate: step 2/7. It functions in the pathway metabolic intermediate biosynthesis; chorismate biosynthesis; chorismate from D-erythrose 4-phosphate and phosphoenolpyruvate: step 3/7. The protein operates within metabolic intermediate biosynthesis; chorismate biosynthesis; chorismate from D-erythrose 4-phosphate and phosphoenolpyruvate: step 4/7. Its pathway is metabolic intermediate biosynthesis; chorismate biosynthesis; chorismate from D-erythrose 4-phosphate and phosphoenolpyruvate: step 5/7. It participates in metabolic intermediate biosynthesis; chorismate biosynthesis; chorismate from D-erythrose 4-phosphate and phosphoenolpyruvate: step 6/7. In terms of biological role, the AROM polypeptide catalyzes 5 consecutive enzymatic reactions in prechorismate polyaromatic amino acid biosynthesis. The protein is Pentafunctional AROM polypeptide of Scheffersomyces stipitis (strain ATCC 58785 / CBS 6054 / NBRC 10063 / NRRL Y-11545) (Yeast).